The primary structure comprises 122 residues: Small ribosomal subunit protein uS12c (122 aa).

This sequence belongs to the universal ribosomal protein uS12 family. Part of the 30S ribosomal subunit.

The protein resides in the plastid. Its subcellular location is the chloroplast. In terms of biological role, with S4 and S5 plays an important role in translational accuracy. Located at the interface of the 30S and 50S subunits. The polypeptide is Small ribosomal subunit protein uS12c (rps12) (Chloranthus spicatus (Chulantree)).